Here is a 7354-residue protein sequence, read N- to C-terminus: Microtubule-actin cross-linking factor 1, isoforms 1/2/3/4 (7354 aa).

Residues Met-1–Leu-47 form a disordered region. The tract at residues Met-1–Asp-295 is actin-binding. The residue at position 4 (Ser-4) is a Phosphoserine. Positions Leu-9 to Arg-30 are enriched in basic and acidic residues. Ser-35 carries the post-translational modification Phosphoserine. Phosphothreonine is present on Thr-42. Ser-57 is subject to Phosphoserine. Calponin-homology (CH) domains are found at residues Arg-78–Gln-181 and Met-194–Pro-298. The stretch at Gln-148–Gly-171 is one LRR 1 repeat. Ser-280 is subject to Phosphoserine. LRR repeat units follow at residues Leu-377–Asn-399 and Leu-441–Gly-464. The SH3 domain maps to Lys-868 to Pro-925. Residues Ile-1050–Ser-1073 form an LRR 5 repeat. Ser-1122 carries the phosphoserine modification. 3 LRR repeats span residues Ala-1128–Asn-1154, Pro-1187–Lys-1210, and His-1257–Ala-1282. Phosphoserine is present on residues Ser-1367 and Ser-1376. 5 Plectin repeats span residues Leu-1577–Gly-1619, Leu-1654–Ser-1696, Arg-1769–Leu-1809, Arg-1811–Glu-1848, and Gly-1855–Leu-1885. Phosphoserine is present on residues Ser-2051, Ser-2077, and Ser-2081. Composition is skewed to basic and acidic residues over residues Lys-2120 to Asn-2131 and Ser-2145 to Ser-2155. The disordered stretch occupies residues Lys-2120–Ser-2155. Plectin repeat units follow at residues Ser-2276–Met-2316, Asn-2352–Glu-2393, Gly-2394–Asp-2425, Leu-2487–Val-2528, and Leu-2671–Gln-2715. Disordered regions lie at residues Ala-2806–Val-2841, Glu-2951–Ile-2978, and Ser-3058–Lys-3099. The segment covering Asn-2812–Ser-2837 has biased composition (basic and acidic residues). Acidic residues predominate over residues Ser-2968–Ile-2978. Ser-3082 and Ser-3085 each carry phosphoserine. LRR repeat units follow at residues Val-3225–Arg-3244, Ser-3606–His-3630, and Leu-3657–Ala-3681. Spectrin repeat units lie at residues Glu-3845–Glu-3920 and Gln-3962–Gln-4070. A Phosphoserine modification is found at Ser-3889. One copy of the LRR 12 repeat lies at Lys-3898–Glu-3920. LRR repeat units follow at residues Leu-4087–Glu-4112 and Ile-4223–Ser-4249. One copy of the Spectrin 3 repeat lies at Arg-4428 to Glu-4536. Ser-4458 and Ser-4483 each carry phosphoserine. 3 LRR repeats span residues Lys-4473–Leu-4496, Gly-4563–Leu-4583, and Lys-4728–Arg-4751. One copy of the Spectrin 4 repeat lies at Thr-4759–Lys-4863. Ser-4921 is modified (phosphoserine). LRR repeat units lie at residues Asn-5010 to Asn-5035, Asn-5131 to Glu-5153, and Lys-5240 to Ser-5263. 13 Spectrin repeats span residues Glu-5195–Glu-5300, Lys-5307–Asp-5409, Ala-5414–Thr-5506, Arg-5631–Glu-5735, Asn-5742–Glu-5844, Leu-5961–Asp-6066, Ala-6071–Glu-6175, Leu-6181–Gln-6284, Gln-6289–Glu-6395, Ala-6400–Asp-6503, Arg-6508–Glu-6614, Gln-6621–Gln-6722, and Gln-6726–Glu-6830. Thr-5394 carries the post-translational modification Phosphothreonine. 2 LRR repeats span residues Met-5654–Ile-5678 and Ala-5763–Glu-5787. Position 5988 is a phosphoserine (Ser-5988). The residue at position 6166 (Lys-6166) is an N6-acetyllysine. The LRR 23 repeat unit spans residues Arg-6452–Val-6475. The segment at Ser-6904–Gln-6937 is disordered. The residue at position 6923 (Ser-6923) is a Phosphoserine. EF-hand domains are found at residues His-7001–Pro-7036 and Thr-7037–Ala-7072. Residues Asp-7014, Asp-7016, Asp-7018, Lys-7020, Glu-7025, Asp-7050, Asp-7052, Asp-7054, Tyr-7056, and Glu-7061 each coordinate Ca(2+). One can recognise a GAR domain in the interval Thr-7077 to Arg-7155. Positions Thr-7077–Arg-7354 are C-terminal tail. Residues Pro-7171–Arg-7354 are disordered. Residues Ser-7191–Thr-7225 show a composition bias toward low complexity. Thr-7220 carries the post-translational modification Phosphothreonine. Polar residues predominate over residues Phe-7242–Ser-7261. Residues Ser-7245 and Ser-7258 each carry the phosphoserine modification. The span at Ser-7276–Ala-7290 shows a compositional bias: low complexity. Positions Gly-7279–Arg-7294 are 4 X 4 AA tandem repeats of [GS]-S-R-[AR]. Residues Ser-7296 and Ser-7299 each carry the phosphoserine modification. Over residues Glu-7305–Glu-7315 the composition is skewed to polar residues. Residues Ser-7316–Arg-7327 show a composition bias toward low complexity.

This sequence belongs to the plakin or cytolinker family. As to quaternary structure, interacts with AXIN1, LRP6 and GOLGA4. Found in a complex composed of MACF1, APC, AXIN1, CTNNB1 and GSK3B. Interacts with MAPRE1, CLASP1 and CLASP2. Interacts with CAMSAP3. Post-translationally, phosphorylated on serine residues in the C-terminal tail by GSK3B. Phosphorylation inhibits microtubule-binding and this plays a critical role in bulge stem cell migration and skin wound repair. Wnt-signaling can repress phosphorylation. Enriched in the hair follicle stem cells (at protein level). Isoform 1 and isoform 2 are ubiquitous expressed, with higher levels seen in lung, heart, thymus, spleen and brain.

It localises to the cytoplasm. The protein localises to the cytoskeleton. The protein resides in the golgi apparatus. It is found in the cell membrane. Its subcellular location is the cell projection. It localises to the ruffle membrane. In terms of biological role, F-actin-binding protein which plays a role in cross-linking actin to other cytoskeletal proteins and also binds to microtubules. Plays an important role in ERBB2-dependent stabilization of microtubules at the cell cortex. Acts as a positive regulator of Wnt receptor signaling pathway and is involved in the translocation of AXIN1 and its associated complex (composed of APC, CTNNB1 and GSK3B) from the cytoplasm to the cell membrane. Has actin-regulated ATPase activity and is essential for controlling focal adhesions (FAs) assembly and dynamics. Interaction with CAMSAP3 at the minus ends of non-centrosomal microtubules tethers microtubules minus-ends to actin filaments, regulating focal adhesion size and cell migration. May play role in delivery of transport vesicles containing GPI-linked proteins from the trans-Golgi network through its interaction with GOLGA4. Plays a key role in wound healing and epidermal cell migration. Required for efficient upward migration of bulge cells in response to wounding and this function is primarily rooted in its ability to coordinate microtubule dynamics and polarize hair follicle stem cells. As a regulator of actin and microtubule arrangement and stabilization, it plays an essential role in neurite outgrowth, branching and spine formation during brain development. This is Microtubule-actin cross-linking factor 1, isoforms 1/2/3/4 from Mus musculus (Mouse).